A 251-amino-acid chain; its full sequence is GTP cyclohydrolase 1 type 2 homolog (251 aa).

A divalent metal cation contacts are provided by His-62, His-63, Asp-103, His-215, and Glu-219.

The protein belongs to the GTP cyclohydrolase I type 2/NIF3 family. As to quaternary structure, homohexamer.

The sequence is that of GTP cyclohydrolase 1 type 2 homolog from Mycoplasmopsis pulmonis (strain UAB CTIP) (Mycoplasma pulmonis).